Reading from the N-terminus, the 527-residue chain is Pyruvate kinase 1, cytosolic (527 aa).

Residue Arg-58 coordinates substrate. K(+) contacts are provided by Asp-60, Ser-62, Asp-92, and Thr-93. 60 to 63 is a binding site for ATP; that stretch reads DFSW. Position 256 (Lys-256) interacts with substrate. Glu-258 is a binding site for Mg(2+). Substrate-binding residues include Gly-281, Asn-282, and Thr-313. Asn-282 serves as a coordination point for Mg(2+).

Belongs to the pyruvate kinase family. In terms of assembly, homotetramer. Mg(2+) serves as cofactor. Requires K(+) as cofactor.

Its subcellular location is the cytoplasm. It is found in the cytosol. It catalyses the reaction pyruvate + ATP = phosphoenolpyruvate + ADP + H(+). The protein operates within carbohydrate degradation; glycolysis; pyruvate from D-glyceraldehyde 3-phosphate: step 5/5. In terms of biological role, key regulatory enzyme of the glycolytic pathway that catalyzes the final step of glycolysis, converting ADP and phosphoenolpyruvate (PEP) to ATP and pyruvate by essentially irreversible transphosphorylation. Is critical for plant growth and development. In Oryza sativa subsp. indica (Rice), this protein is Pyruvate kinase 1, cytosolic.